The primary structure comprises 373 residues: Chaperone protein DnaJ (373 aa).

A J domain is found at 5-69 (DYYEVLGVNK…NKRANYDQFG (65 aa)). A CR-type zinc finger spans residues 130 to 212 (GTKKEISIKK…CKGKGTENKT (83 aa)). The Zn(2+) site is built by Cys-143, Cys-146, Cys-160, Cys-163, Cys-186, Cys-189, Cys-200, and Cys-203. CXXCXGXG motif repeat units lie at residues 143–150 (CHTCNGDG), 160–167 (CSYCNGAG), 186–193 (CPKCEGSG), and 200–207 (CPTCKGKG).

Belongs to the DnaJ family. As to quaternary structure, homodimer. Zn(2+) serves as cofactor.

It is found in the cytoplasm. Its function is as follows. Participates actively in the response to hyperosmotic and heat shock by preventing the aggregation of stress-denatured proteins and by disaggregating proteins, also in an autonomous, DnaK-independent fashion. Unfolded proteins bind initially to DnaJ; upon interaction with the DnaJ-bound protein, DnaK hydrolyzes its bound ATP, resulting in the formation of a stable complex. GrpE releases ADP from DnaK; ATP binding to DnaK triggers the release of the substrate protein, thus completing the reaction cycle. Several rounds of ATP-dependent interactions between DnaJ, DnaK and GrpE are required for fully efficient folding. Also involved, together with DnaK and GrpE, in the DNA replication of plasmids through activation of initiation proteins. The polypeptide is Chaperone protein DnaJ (Staphylococcus epidermidis (strain ATCC 12228 / FDA PCI 1200)).